The primary structure comprises 443 residues: D-serine dehydratase (443 aa).

An N6-(pyridoxal phosphate)lysine modification is found at lysine 118.

Belongs to the serine/threonine dehydratase family. DsdA subfamily. Monomer. The cofactor is pyridoxal 5'-phosphate.

The catalysed reaction is D-serine = pyruvate + NH4(+). This chain is D-serine dehydratase, found in Yersinia enterocolitica serotype O:8 / biotype 1B (strain NCTC 13174 / 8081).